We begin with the raw amino-acid sequence, 247 residues long: 4-nitrobenzoate reductase (247 aa).

Residue 29 to 33 (RRSVR) participates in FMN binding. NADP(+) is bound by residues serine 59, arginine 112, tyrosine 120, and leucine 126. Arginine 232 serves as a coordination point for FMN.

The protein belongs to the nitroreductase family. The cofactor is FMN.

The catalysed reaction is 4-nitrobenzoate + 2 NADPH + 2 H(+) = 4-hydroxylaminobenzoate + 2 NADP(+) + H2O. Nitroreductase involved in the degradation of nitroaromatic compounds. Catalyzes the conversion of 4-nitrobenzoate to 4-hydroxylaminobenzoate. The polypeptide is 4-nitrobenzoate reductase (Nocardioides sp. (strain LMS-CY)).